Here is a 63-residue protein sequence, read N- to C-terminus: Large ribosomal subunit protein uL29 (63 aa).

The protein belongs to the universal ribosomal protein uL29 family.

This chain is Large ribosomal subunit protein uL29, found in Shigella flexneri.